Here is a 791-residue protein sequence, read N- to C-terminus: Cullin-2 (791 aa).

The 63-residue stretch at 722–784 (DRKYYMECAI…KMYIQRTDQN (63 aa)) folds into the Cullin neddylation domain. Lys736 is covalently cross-linked (Glycyl lysine isopeptide (Lys-Gly) (interchain with G-Cter in NEDD8)).

Belongs to the cullin family. In terms of assembly, component of multiple CBC (Cul2-ElonginB-ElonginC) E3 ubiquitin-protein ligase complexes formed of cul-2, elb-1, elc-1, rbx-1 and a variable substrate recognition component. Component of the CBC(fem-1) E3 ubiquitin-protein ligase complex with fem-1, fem-2 and fem-3. The CBC(fem-1) complex interacts with tra-1 and promotes tra-1 degradation. Probable component of the CBC(lrr-1) E3 ubiquitin-protein ligase complex incuding cul-2, elb-1, elc-1, rbx-1 and lrr-1. The CBC(lrr-1) complex interacts with the DNA replisome complex at the end of S phase; the interaction promotes the release of components of the CMG helicase complex (a component of the replisome) from chromatin. Probable component of an CBC(zif-1) E3 ubiquitin-protein ligase including cul-2, elc-1, rbx-1 and zif-1. Part of an E3 ubiquitin-protein ligase complex including cul-2, elc-1 and zyg-11. Interacts with Skp1-related protein skr-10. Post-translationally, neddylated; which enhances the ubiquitination activity of CBC (Cul2-ElonginB-ElonginC) E3 ubiquitin-protein ligase complexes. In terms of tissue distribution, in adults, highly expressed in meiotic cells and oocytes. In larvae, expressed in many proliferating cell types: P cells during the L1 stage; seam cells when they divide at every molt; vulval and somatic gonad cells in late L3 and L4 stages; and intestinal cells throughout larval development.

It is found in the cytoplasm. It localises to the nucleus. It functions in the pathway protein modification; protein ubiquitination. Core component of multiple cullin-RING-based CBC (Cul2-ElonginB-ElonginC) E3 ubiquitin-protein ligase complexes which mediate the ubiquitination and subsequent proteasomal degradation of target proteins. As a scaffold protein may contribute to catalysis through positioning of the substrate and the ubiquitin-conjugating enzyme. The functional specificity of the CBC complex depends on the variable substrate recognition component. May function in ubiquitin-mediated degradation of CKIs to target cki-1 for degradation. CBC(zif-1) may ensure germline precursor cell asymmetry by targeting germline proteins for destruction if expressed in non-germline cells. As part of the CBC(fem-1) complex directs ubiquitination of tra-1. As part of the CBC(lrr-1) complex, required for the ubiquitination and dissasembly of the CMG helicase complex from chromatin at the end of DNA replication. Positive cell-cycle regulator that is required at two distinct points in the cell cycle; the G1-to-S-phase transition and mitosis. Also required for proper cytoskeletal movement and mitotic chromosome condensation. The protein is Cullin-2 of Caenorhabditis elegans.